We begin with the raw amino-acid sequence, 409 residues long: Tyrosine--tRNA ligase (409 aa).

Tyrosine 35 contributes to the L-tyrosine binding site. A 'HIGH' region motif is present at residues 40–49 (PTGSSLHVGH). Residues tyrosine 168 and glutamine 172 each coordinate L-tyrosine. The short motif at 228 to 232 (KMGKT) is the 'KMSKS' region element. Position 231 (lysine 231) interacts with ATP. Residues 339-404 (IKVTDLFVQV…AGKKRVVRIV (66 aa)) form the S4 RNA-binding domain.

It belongs to the class-I aminoacyl-tRNA synthetase family. TyrS type 1 subfamily. Homodimer.

It localises to the cytoplasm. It carries out the reaction tRNA(Tyr) + L-tyrosine + ATP = L-tyrosyl-tRNA(Tyr) + AMP + diphosphate + H(+). Functionally, catalyzes the attachment of tyrosine to tRNA(Tyr) in a two-step reaction: tyrosine is first activated by ATP to form Tyr-AMP and then transferred to the acceptor end of tRNA(Tyr). This chain is Tyrosine--tRNA ligase, found in Treponema pallidum (strain Nichols).